Reading from the N-terminus, the 196-residue chain is Large ribosomal subunit protein eL15 (196 aa).

The disordered stretch occupies residues 153–196 (DPSSRGRATRGKTSAGRKGRGMATRGKGTEKTRPSIRAYKSRGK). Residues 159–172 (RATRGKTSAGRKGR) show a composition bias toward basic residues.

It belongs to the eukaryotic ribosomal protein eL15 family.

In Methanosarcina acetivorans (strain ATCC 35395 / DSM 2834 / JCM 12185 / C2A), this protein is Large ribosomal subunit protein eL15.